The following is a 332-amino-acid chain: Holliday junction branch migration complex subunit RuvB (332 aa).

Positions 1–181 are large ATPase domain (RuvB-L); the sequence is MARILDNNVM…FGITGHMEYY (181 aa). ATP is bound by residues L20, R21, G62, K65, T66, T67, 128 to 130, R171, Y181, and R218; that span reads EDF. Residue T66 coordinates Mg(2+). Residues 182–252 form a small ATPAse domain (RuvB-S) region; that stretch reads QEKDLTEIVE…ITDRALTMLD (71 aa). Residues 255-332 are head domain (RuvB-H); that stretch reads REGLDYIDQK…RHLGYPYQNT (78 aa). Residues R291, R310, R312, and R315 each coordinate DNA.

Belongs to the RuvB family. Homohexamer. Forms an RuvA(8)-RuvB(12)-Holliday junction (HJ) complex. HJ DNA is sandwiched between 2 RuvA tetramers; dsDNA enters through RuvA and exits via RuvB. An RuvB hexamer assembles on each DNA strand where it exits the tetramer. Each RuvB hexamer is contacted by two RuvA subunits (via domain III) on 2 adjacent RuvB subunits; this complex drives branch migration. In the full resolvosome a probable DNA-RuvA(4)-RuvB(12)-RuvC(2) complex forms which resolves the HJ.

It is found in the cytoplasm. It carries out the reaction ATP + H2O = ADP + phosphate + H(+). Its function is as follows. The RuvA-RuvB-RuvC complex processes Holliday junction (HJ) DNA during genetic recombination and DNA repair, while the RuvA-RuvB complex plays an important role in the rescue of blocked DNA replication forks via replication fork reversal (RFR). RuvA specifically binds to HJ cruciform DNA, conferring on it an open structure. The RuvB hexamer acts as an ATP-dependent pump, pulling dsDNA into and through the RuvAB complex. RuvB forms 2 homohexamers on either side of HJ DNA bound by 1 or 2 RuvA tetramers; 4 subunits per hexamer contact DNA at a time. Coordinated motions by a converter formed by DNA-disengaged RuvB subunits stimulates ATP hydrolysis and nucleotide exchange. Immobilization of the converter enables RuvB to convert the ATP-contained energy into a lever motion, pulling 2 nucleotides of DNA out of the RuvA tetramer per ATP hydrolyzed, thus driving DNA branch migration. The RuvB motors rotate together with the DNA substrate, which together with the progressing nucleotide cycle form the mechanistic basis for DNA recombination by continuous HJ branch migration. Branch migration allows RuvC to scan DNA until it finds its consensus sequence, where it cleaves and resolves cruciform DNA. This is Holliday junction branch migration complex subunit RuvB from Streptococcus pyogenes serotype M1.